Consider the following 201-residue polypeptide: Ependymin-related protein 2 (201 aa).

The signal sequence occupies residues 1–21; it reads MILQVVLLLACLSGAIVSTGA. N-linked (GlcNAc...) asparagine glycosylation is found at asparagine 38 and asparagine 137. The short motif at 199–201 is the Microbody targeting signal element; that stretch reads CRA.

It belongs to the ependymin family. Component of the acid-soluble and acid-insoluble organic matrix of calcified shell layers (at protein level).

Its subcellular location is the secreted. The protein is Ependymin-related protein 2 of Haliotis asinina (Donkey's ear abalone).